Here is a 262-residue protein sequence, read N- to C-terminus: 3-methyl-2-oxobutanoate hydroxymethyltransferase (262 aa).

Positions 43 and 82 each coordinate Mg(2+). Residues 43 to 44, aspartate 82, and lysine 111 each bind 3-methyl-2-oxobutanoate; that span reads DS. Glutamate 113 contributes to the Mg(2+) binding site. Glutamate 180 serves as the catalytic Proton acceptor.

Belongs to the PanB family. In terms of assembly, homodecamer; pentamer of dimers. It depends on Mg(2+) as a cofactor.

Its subcellular location is the cytoplasm. The enzyme catalyses 3-methyl-2-oxobutanoate + (6R)-5,10-methylene-5,6,7,8-tetrahydrofolate + H2O = 2-dehydropantoate + (6S)-5,6,7,8-tetrahydrofolate. The protein operates within cofactor biosynthesis; coenzyme A biosynthesis. Its function is as follows. Catalyzes the reversible reaction in which hydroxymethyl group from 5,10-methylenetetrahydrofolate is transferred onto alpha-ketoisovalerate to form ketopantoate. The polypeptide is 3-methyl-2-oxobutanoate hydroxymethyltransferase (Pyrobaculum aerophilum (strain ATCC 51768 / DSM 7523 / JCM 9630 / CIP 104966 / NBRC 100827 / IM2)).